The sequence spans 251 residues: Probable transcriptional regulatory protein Franean1_5147 (251 aa).

The protein belongs to the TACO1 family.

It is found in the cytoplasm. The protein is Probable transcriptional regulatory protein Franean1_5147 of Parafrankia sp. (strain EAN1pec).